Reading from the N-terminus, the 156-residue chain is Lipoprotein signal peptidase (156 aa).

The next 3 membrane-spanning stretches (helical) occupy residues 37–57, 68–88, and 95–115; these read VIPG…FGFL, FFVV…KSAE, and ILGL…RILY. Active-site residues include aspartate 120 and aspartate 138. Residues 133–153 traverse the membrane as a helical segment; that stretch reads AFNVADIAICLGAFAMIVSFY.

This sequence belongs to the peptidase A8 family.

The protein resides in the cell inner membrane. It carries out the reaction Release of signal peptides from bacterial membrane prolipoproteins. Hydrolyzes -Xaa-Yaa-Zaa-|-(S,diacylglyceryl)Cys-, in which Xaa is hydrophobic (preferably Leu), and Yaa (Ala or Ser) and Zaa (Gly or Ala) have small, neutral side chains.. Its pathway is protein modification; lipoprotein biosynthesis (signal peptide cleavage). In terms of biological role, this protein specifically catalyzes the removal of signal peptides from prolipoproteins. This Maridesulfovibrio salexigens (strain ATCC 14822 / DSM 2638 / NCIMB 8403 / VKM B-1763) (Desulfovibrio salexigens) protein is Lipoprotein signal peptidase.